The chain runs to 476 residues: tRNA(Ile)-lysidine synthase (476 aa).

Residue 30 to 35 (SGGPDS) coordinates ATP.

The protein belongs to the tRNA(Ile)-lysidine synthase family.

It is found in the cytoplasm. It carries out the reaction cytidine(34) in tRNA(Ile2) + L-lysine + ATP = lysidine(34) in tRNA(Ile2) + AMP + diphosphate + H(+). Its function is as follows. Ligates lysine onto the cytidine present at position 34 of the AUA codon-specific tRNA(Ile) that contains the anticodon CAU, in an ATP-dependent manner. Cytidine is converted to lysidine, thus changing the amino acid specificity of the tRNA from methionine to isoleucine. This chain is tRNA(Ile)-lysidine synthase, found in Bacillus cereus (strain ATCC 10987 / NRS 248).